Here is a 72-residue protein sequence, read N- to C-terminus: Translational regulator CsrA (72 aa).

Belongs to the CsrA/RsmA family. In terms of assembly, homodimer; the beta-strands of each monomer intercalate to form a hydrophobic core, while the alpha-helices form wings that extend away from the core.

The protein localises to the cytoplasm. Functionally, a translational regulator that binds mRNA to regulate translation initiation and/or mRNA stability. Usually binds in the 5'-UTR at or near the Shine-Dalgarno sequence preventing ribosome-binding, thus repressing translation. Its main target seems to be the major flagellin gene, while its function is anatagonized by FliW. This Clostridium botulinum (strain ATCC 19397 / Type A) protein is Translational regulator CsrA.